Consider the following 549-residue polypeptide: Chaperonin GroEL 2 (549 aa).

Residues 29 to 32, lysine 50, 86 to 90, glycine 414, 477 to 479, and aspartate 493 contribute to the ATP site; these read TLGP, DGTTT, and NAA.

It belongs to the chaperonin (HSP60) family. In terms of assembly, forms a cylinder of 14 subunits composed of two heptameric rings stacked back-to-back. Interacts with the co-chaperonin GroES.

The protein resides in the cytoplasm. It carries out the reaction ATP + H2O + a folded polypeptide = ADP + phosphate + an unfolded polypeptide.. In terms of biological role, together with its co-chaperonin GroES, plays an essential role in assisting protein folding. The GroEL-GroES system forms a nano-cage that allows encapsulation of the non-native substrate proteins and provides a physical environment optimized to promote and accelerate protein folding. The protein is Chaperonin GroEL 2 of Myxococcus xanthus (strain DK1622).